Consider the following 303-residue polypeptide: Coenzyme PQQ synthesis protein B (303 aa).

It belongs to the PqqB family.

Its pathway is cofactor biosynthesis; pyrroloquinoline quinone biosynthesis. Functionally, may be involved in the transport of PQQ or its precursor to the periplasm. The protein is Coenzyme PQQ synthesis protein B of Pseudomonas syringae pv. tomato (strain ATCC BAA-871 / DC3000).